The following is a 258-amino-acid chain: Granzyme A (258 aa).

A signal peptide spans 1 to 26; that stretch reads MNIPFPFSFPPAICLLLIPGVFPVSC. A propeptide spans 27 to 28 (activation peptide); sequence EG. Residues 29–255 enclose the Peptidase S1 domain; the sequence is IIGGNEVAPH…HLNWIKKTIA (227 aa). C52 and C68 are joined by a disulfide. Catalysis depends on charge relay system residues H67 and D112. Cystine bridges form between C146–C217, C178–C196, and C207–C230. N169 carries an N-linked (GlcNAc...) asparagine glycan. The active-site Charge relay system is S211.

This sequence belongs to the peptidase S1 family. Granzyme subfamily. In terms of assembly, homodimer; disulfide-linked. Interacts with APEX1.

It is found in the secreted. It localises to the cytoplasmic granule. It carries out the reaction Hydrolysis of proteins, including fibronectin, type IV collagen and nucleolin. Preferential cleavage: -Arg-|-Xaa-, -Lys-|-Xaa- &gt;&gt; -Phe-|-Xaa- in small molecule substrates.. Its function is as follows. Abundant protease in the cytosolic granules of cytotoxic T-cells and NK-cells which activates caspase-independent pyroptosis when delivered into the target cell through the immunological synapse. It cleaves after Lys or Arg. Cleaves APEX1 after 'Lys-31' and destroys its oxidative repair activity. Cleaves the nucleosome assembly protein SET after 'Lys-189', which disrupts its nucleosome assembly activity and allows the SET complex to translocate into the nucleus to nick and degrade the DNA. This chain is Granzyme A (GZMA), found in Bos taurus (Bovine).